Reading from the N-terminus, the 157-residue chain is SsrA-binding protein (157 aa).

The protein belongs to the SmpB family.

The protein resides in the cytoplasm. Required for rescue of stalled ribosomes mediated by trans-translation. Binds to transfer-messenger RNA (tmRNA), required for stable association of tmRNA with ribosomes. tmRNA and SmpB together mimic tRNA shape, replacing the anticodon stem-loop with SmpB. tmRNA is encoded by the ssrA gene; the 2 termini fold to resemble tRNA(Ala) and it encodes a 'tag peptide', a short internal open reading frame. During trans-translation Ala-aminoacylated tmRNA acts like a tRNA, entering the A-site of stalled ribosomes, displacing the stalled mRNA. The ribosome then switches to translate the ORF on the tmRNA; the nascent peptide is terminated with the 'tag peptide' encoded by the tmRNA and targeted for degradation. The ribosome is freed to recommence translation, which seems to be the essential function of trans-translation. This Lacticaseibacillus paracasei (strain ATCC 334 / BCRC 17002 / CCUG 31169 / CIP 107868 / KCTC 3260 / NRRL B-441) (Lactobacillus paracasei) protein is SsrA-binding protein.